A 226-amino-acid polypeptide reads, in one-letter code: Probable thiol methyltransferase 2 (226 aa).

S-adenosyl-L-methionine contacts are provided by W29, W33, W40, and G67. S79 carries the post-translational modification Phosphoserine. Residues D88, 116-117 (DF), and Y132 each bind S-adenosyl-L-methionine.

It belongs to the class I-like SAM-binding methyltransferase superfamily. TPMT family.

The enzyme catalyses a thiol + S-adenosyl-L-methionine = a methyl thioether + S-adenosyl-L-homocysteine + H(+). In terms of biological role, S-adenosyl-L-methionine-dependent methyltransferase. This Arabidopsis thaliana (Mouse-ear cress) protein is Probable thiol methyltransferase 2 (HOL3).